Reading from the N-terminus, the 751-residue chain is Proton-associated sugar transporter A (751 aa).

A run of 6 helical transmembrane segments spans residues 93–113, 123–143, 155–175, 191–211, 233–253, and 268–288; these read ILFGIEFSYAMETAYVTPVLL, SLVWFISPILGFLLQPLLGAW, RPFILVLAIGALLGLSLLLNG, WGILLTVCGVVLMDFSADSAD, IHALMAGLGGGFGYVVGGIHW, and VIYVFTAITLSVTTVLTLISI. Residue Thr-500 is modified to Phosphothreonine. 6 helical membrane-spanning segments follow: residues 536–556, 576–596, 606–626, 630–650, 688–708, and 710–730; these read GWLSFEGMLLFYTDFMGEVVF, VTMGCWGMCIYAFSAAFYSAI, VRTLYFIAYLAFGLGTGLATL, LYVVLSLCTTYGILFSTLCTL, FLAQILVSLVLGPLTSAVGSA, and GVMYFSSLVSFLGCLYSSLCV.

The protein belongs to the glycoside-pentoside-hexuronide (GPH) cation symporter transporter (TC 2.A.2) family.

The protein resides in the membrane. The catalysed reaction is D-galactose(in) + H(+)(in) = D-galactose(out) + H(+)(out). It catalyses the reaction D-glucose(out) + H(+)(out) = D-glucose(in) + H(+)(in). In terms of biological role, proton-associated glucose transporter in the brain. The protein is Proton-associated sugar transporter A of Mus musculus (Mouse).